Consider the following 282-residue polypeptide: Probable metal transport system membrane protein TM_0125 (282 aa).

9 consecutive transmembrane segments (helical) span residues alanine 33–phenylalanine 53, phenylalanine 58–glycine 78, alanine 79–phenylalanine 99, alanine 109–glycine 129, serine 148–phenylalanine 168, phenylalanine 184–valine 204, valine 210–phenylalanine 230, phenylalanine 234–leucine 254, and leucine 259–leucine 279.

This sequence belongs to the ABC-3 integral membrane protein family.

It localises to the cell inner membrane. In terms of biological role, part of an ATP-driven transport system TM_0123/TM_0124/TM_0125 for a metal. This Thermotoga maritima (strain ATCC 43589 / DSM 3109 / JCM 10099 / NBRC 100826 / MSB8) protein is Probable metal transport system membrane protein TM_0125.